Here is a 501-residue protein sequence, read N- to C-terminus: uncharacterized protein (501 aa).

Glu-236 functions as the Proton donor in the catalytic mechanism. Glu-333 (nucleophile) is an active-site residue.

It belongs to the glycosyl hydrolase 5 (cellulase A) family.

It localises to the mitochondrion intermembrane space. This is an uncharacterized protein from Saccharomyces cerevisiae (strain ATCC 204508 / S288c) (Baker's yeast).